A 184-amino-acid polypeptide reads, in one-letter code: NADH-quinone oxidoreductase subunit B (184 aa).

[4Fe-4S] cluster-binding residues include Cys63, Cys64, Cys128, and Cys158.

It belongs to the complex I 20 kDa subunit family. As to quaternary structure, NDH-1 is composed of 14 different subunits. Subunits NuoB, C, D, E, F, and G constitute the peripheral sector of the complex. [4Fe-4S] cluster serves as cofactor.

Its subcellular location is the cell inner membrane. It catalyses the reaction a quinone + NADH + 5 H(+)(in) = a quinol + NAD(+) + 4 H(+)(out). In terms of biological role, NDH-1 shuttles electrons from NADH, via FMN and iron-sulfur (Fe-S) centers, to quinones in the respiratory chain. The immediate electron acceptor for the enzyme in this species is believed to be ubiquinone. Couples the redox reaction to proton translocation (for every two electrons transferred, four hydrogen ions are translocated across the cytoplasmic membrane), and thus conserves the redox energy in a proton gradient. The polypeptide is NADH-quinone oxidoreductase subunit B (Xanthomonas oryzae pv. oryzae (strain MAFF 311018)).